We begin with the raw amino-acid sequence, 670 residues long: Leucine-rich repeat-containing protein 45 (670 aa).

5 LRR repeats span residues 87-108 (TVKS…ALGK), 115-136 (SIRS…FSFF), 145-166 (FLQR…ELAM), 173-194 (SLQE…ALLN), and 201-223 (TLKK…VEQA). Residues 234 to 645 (LSETQNRTSV…ISRMKEEEAQ (412 aa)) adopt a coiled-coil conformation.

As to quaternary structure, homomer.

Its subcellular location is the cytoplasm. It localises to the cytoskeleton. It is found in the microtubule organizing center. The protein localises to the centrosome. In terms of biological role, component of the proteinaceous fiber-like linker between two centrioles, required for centrosome cohesion. This Gallus gallus (Chicken) protein is Leucine-rich repeat-containing protein 45 (LRRC45).